We begin with the raw amino-acid sequence, 1350 residues long: Zinc finger protein Xfin (1350 aa).

The KRAB domain occupies 1-58 (MEEPKCLQREMYKSVMTENYQCVLSLGYPIRKPEIVSMMEVGEELWSKNDSARPGQKE). The segment at 47-68 (SKNDSARPGQKEVEGETPKESD) is disordered. C2H2-type zinc fingers lie at residues 108-130 (HICS…QRMH), 136-158 (HHCP…QRTH), 164-186 (YQCV…QRTH), 192-214 (YTCL…RRTH), 220-242 (YRCS…LRTH), 248-270 (YECP…KRTH), 276-298 (FRCS…MRKH), 326-348 (YSCS…QQTH), 354-376 (YLCS…FRTH), 382-404 (YQCA…LRTH), 410-432 (FKCS…QRTH), 438-460 (YKCS…QRIH), 466-488 (YKCT…QKVH), 503-525 (HKCS…SKLH), 531-553 (FQCA…IRVH), 559-581 (FKCL…WRIH), 587-609 (FPCY…HRTH), 615-637 (HKCS…SRTH), 643-665 (YPCT…QRIH), 671-693 (YHCT…RRTH), 699-721 (YRCP…LVVH), 750-772 (YPCT…LRTH), 778-800 (YPCN…LRTH), 806-828 (YHCP…QRTH), 834-856 (YTCS…MRTH), 862-884 (YKCE…QRIH), 890-912 (YHCP…QRIH), 918-940 (YPCG…LKCH), 988-1010 (FKCN…VRIH), 1016-1038 (YKCS…YRTH), 1044-1066 (YKCG…QRVH), 1136-1158 (YSCS…WRMH), 1164-1186 (YTCK…VRIH), 1192-1214 (YPCS…QRIH), 1220-1242 (YTCT…SRTH), 1248-1270 (YKCN…MRTH), and 1276-1298 (YGCN…QRMC).

Belongs to the krueppel C2H2-type zinc-finger protein family. Post-translationally, phosphorylated. Phosphorylation enhances RNA binding. Expressed in oocytes, and in specialized cell types such as neural retina cones in adults.

Its subcellular location is the cytoplasm. In terms of biological role, binds to poly-G sequences in RNA. May function in post-translational regulation processes. This chain is Zinc finger protein Xfin, found in Xenopus laevis (African clawed frog).